A 323-amino-acid chain; its full sequence is RNA polymerase sigma factor SigB (323 aa).

Residues 1-228 (MADAPTRATT…DMPVGSEEEA (228 aa)) are sufficient to interact with RbpA. The segment at 25–59 (DLVRVYLNGIGKTALLNAAGEVELAKRIEAGLYAE) is sigma-70 factor domain-1. Positions 90–160 (LLEANLRLVV…TRGMADQSRT (71 aa)) are sigma-70 factor domain-2. Positions 114–117 (DLIQ) match the Polymerase core binding motif. A sigma-70 factor domain-3 region spans residues 169–245 (EQVNKLARIK…DAEAMSAENA (77 aa)). Positions 258–311 (VLATLDEREHQVIRLRFGLDDGQPRTLDQIGKLFGLSRERVRQIERDVMSKLRH) are sigma-70 factor domain-4. Positions 284–303 (LDQIGKLFGLSRERVRQIER) form a DNA-binding region, H-T-H motif.

Belongs to the sigma-70 factor family. Monomer. Interacts transiently with the RNA polymerase catalytic core formed by RpoA, RpoB, RpoC and RpoZ (2 alpha, 1 beta, 1 beta' and 1 omega subunit) to form the RNA polymerase holoenzyme that can initiate transcription.

Its function is as follows. Sigma factors are initiation factors that promote the attachment of RNA polymerase to specific initiation sites and are then released. A non-essential principal sigma factor that responds to cell envelope stress and hypoxia. The sequence is that of RNA polymerase sigma factor SigB (sigB) from Mycobacterium tuberculosis (strain CDC 1551 / Oshkosh).